A 579-amino-acid chain; its full sequence is uncharacterized protein (579 aa).

Positions 449–577 (QKGVFILVDI…GKNRLMIHDS (129 aa)) constitute a GGDEF domain.

This is an uncharacterized protein from Bacillus subtilis (strain 168).